The chain runs to 667 residues: Protein angel homolog 1 (667 aa).

Phosphoserine is present on residues Ser-77 and Ser-105.

It belongs to the CCR4/nocturin family.

This Rattus norvegicus (Rat) protein is Protein angel homolog 1.